A 101-amino-acid polypeptide reads, in one-letter code: NADH-quinone oxidoreductase subunit K (101 aa).

3 consecutive transmembrane segments (helical) span residues 4–24 (LSHY…GIFL), 30–50 (IVLL…FIAF), and 61–81 (VFVF…LAIL).

The protein belongs to the complex I subunit 4L family. NDH-1 is composed of 14 different subunits. Subunits NuoA, H, J, K, L, M, N constitute the membrane sector of the complex.

The protein localises to the cell inner membrane. The catalysed reaction is a quinone + NADH + 5 H(+)(in) = a quinol + NAD(+) + 4 H(+)(out). Its function is as follows. NDH-1 shuttles electrons from NADH, via FMN and iron-sulfur (Fe-S) centers, to quinones in the respiratory chain. The immediate electron acceptor for the enzyme in this species is believed to be ubiquinone. Couples the redox reaction to proton translocation (for every two electrons transferred, four hydrogen ions are translocated across the cytoplasmic membrane), and thus conserves the redox energy in a proton gradient. This Methylovorus glucosotrophus (strain SIP3-4) protein is NADH-quinone oxidoreductase subunit K.